We begin with the raw amino-acid sequence, 84 residues long: Small ribosomal subunit protein bS20 (84 aa).

Belongs to the bacterial ribosomal protein bS20 family.

Binds directly to 16S ribosomal RNA. In Ligilactobacillus salivarius (strain UCC118) (Lactobacillus salivarius), this protein is Small ribosomal subunit protein bS20.